A 464-amino-acid polypeptide reads, in one-letter code: Cysteine--tRNA ligase (464 aa).

Cysteine 29 provides a ligand contact to Zn(2+). Positions 31-41 (ATVQGDPHIGH) match the 'HIGH' region motif. The Zn(2+) site is built by cysteine 207, histidine 232, and glutamate 236. The short motif at 263–267 (KMSKS) is the 'KMSKS' region element. ATP is bound at residue lysine 266.

This sequence belongs to the class-I aminoacyl-tRNA synthetase family. Monomer. Zn(2+) is required as a cofactor.

The protein localises to the cytoplasm. The enzyme catalyses tRNA(Cys) + L-cysteine + ATP = L-cysteinyl-tRNA(Cys) + AMP + diphosphate. The sequence is that of Cysteine--tRNA ligase from Rhodococcus opacus (strain B4).